Reading from the N-terminus, the 1310-residue chain is Clustered mitochondria protein homolog (1310 aa).

A Clu domain is found at 375 to 619 (DITRSQESYL…RVTPLDVVWQ (245 aa)). The span at 662 to 682 (KAQEDAANKEQPSETTESKEG) shows a compositional bias: basic and acidic residues. 2 disordered regions span residues 662 to 692 (KAQE…EEAL) and 931 to 960 (VANG…SRAV). TPR repeat units lie at residues 1033–1066 (AKLY…TERT), 1075–1108 (ILAY…WKII), and 1117–1150 (ITTM…CESL). 2 disordered regions span residues 1245–1266 (VQPQ…ANAS) and 1281–1310 (GGDA…KSSA).

The protein belongs to the CLU family. In terms of assembly, may associate with the eukaryotic translation initiation factor 3 (eIF-3) complex.

Its subcellular location is the cytoplasm. MRNA-binding protein involved in proper cytoplasmic distribution of mitochondria. This chain is Clustered mitochondria protein homolog, found in Aspergillus fumigatus (strain CBS 144.89 / FGSC A1163 / CEA10) (Neosartorya fumigata).